We begin with the raw amino-acid sequence, 960 residues long: ATPase 4, plasma membrane-type (960 aa).

At 1-69 (MTTTVEDNRE…EKKESKFLKF (69 aa)) the chain is on the cytoplasmic side. Residues 70 to 89 (LGFMWNPLSWVMEAAAIMAI) form a helical membrane-spanning segment. The Extracellular segment spans residues 90-101 (ALANGGGKPPDW). Residues 102-122 (QDFVGIITLLVINSTISFIEE) form a helical membrane-spanning segment. Residues 123 to 251 (NNAGNAAAAL…GHFQQVLTAI (129 aa)) lie on the Cytoplasmic side of the membrane. The chain crosses the membrane as a helical span at residues 252–272 (GNFCICSIAVGMLIEIVVMYP). At 273–281 (IQHRAYRPG) the chain is on the extracellular side. The helical transmembrane segment at 282-299 (IDNLLVLLIGGIPIAMPT) threads the bilayer. Residues 300-651 (VLSVTMAIGS…TSRAIFQRMK (352 aa)) are Cytoplasmic-facing. The active-site 4-aspartylphosphate intermediate is the D337. Mg(2+)-binding residues include D596 and D600. Residues 652–673 (NYTIYAVSITIRIVLGFMLLAL) form a helical membrane-spanning segment. Topologically, residues 674–678 (IWQFD) are extracellular. Residues 679-701 (FPPFMVLIIAILNDGTIMTISKD) form a helical membrane-spanning segment. Topologically, residues 702–717 (RVKPSPLPDSWKLSEI) are cytoplasmic. Residues 718-738 (FATGVVFGSYMAMMTVIFFWV) form a helical membrane-spanning segment. Residues 739 to 763 (SYKTDFFPRTFGVATLEKTAHDDFR) are Extracellular-facing. A helical transmembrane segment spans residues 764–784 (KLASAIYLQVSIISQALIFVT). Residues 785-796 (RSRSWSFVERPG) are Cytoplasmic-facing. A helical transmembrane segment spans residues 797–817 (IFLMIAFILAQLVATLIAVYA). The Extracellular segment spans residues 818–825 (NWSFAAIE). Residues 826-846 (GIGWGWAGVIWLYNIIFYIPL) form a helical membrane-spanning segment. The Cytoplasmic portion of the chain corresponds to 847-960 (DFIKFFIRYA…IETIQQAYTV (114 aa)). At T893 the chain carries Phosphothreonine. Phosphoserine is present on S942. Residues 958–960 (YTV) form an interaction with 14-3-3 proteins region. At T959 the chain carries Phosphothreonine.

Belongs to the cation transport ATPase (P-type) (TC 3.A.3) family. Type IIIA subfamily. As to quaternary structure, binds to 14-3-3 proteins. The binding is induced by phosphorylation of Thr-959. Binding to 14-3-3 proteins activates the H(+)-ATPase. As to expression, expressed in guard cells and roots.

It is found in the cell membrane. It catalyses the reaction ATP + H2O + H(+)(in) = ADP + phosphate + 2 H(+)(out). The plasma membrane H(+) ATPase of plants and fungi generates a proton gradient that drives the active transport of nutrients by H(+)-symport. The resulting external acidification and/or internal alkinization may mediate growth responses. This chain is ATPase 4, plasma membrane-type (AHA4), found in Arabidopsis thaliana (Mouse-ear cress).